A 94-amino-acid chain; its full sequence is Sucrose operon repressor (94 aa).

The 56-residue stretch at 1–56 (MASLHDVARLAGVSKSTVSRVINDEYGVKEATKQKVRQAVAECGYVPNQVAKDLKE) folds into the HTH lacI-type domain. The segment at residues 4–23 (LHDVARLAGVSKSTVSRVIN) is a DNA-binding region (H-T-H motif).

In terms of biological role, repressor for the scr operon. Binds D-fructose as an inducer. The protein is Sucrose operon repressor (scrR) of Vibrio alginolyticus.